The following is a 398-amino-acid chain: NADH-ubiquinone oxidoreductase 49 kDa subunit (398 aa).

Belongs to the complex I 49 kDa subunit family.

The protein resides in the mitochondrion. It catalyses the reaction a ubiquinone + NADH + 5 H(+)(in) = a ubiquinol + NAD(+) + 4 H(+)(out). In terms of biological role, core subunit of the mitochondrial membrane respiratory chain NADH dehydrogenase (Complex I) that is believed to belong to the minimal assembly required for catalysis. Complex I functions in the transfer of electrons from NADH to the respiratory chain. The immediate electron acceptor for the enzyme is believed to be ubiquinone. Component of the iron-sulfur (IP) fragment of the enzyme. Component of the iron-sulfur (IP) fragment of the enzyme. This Pylaiella littoralis (Seaweed) protein is NADH-ubiquinone oxidoreductase 49 kDa subunit (NAD7).